Reading from the N-terminus, the 228-residue chain is uncharacterized protein (228 aa).

S-adenosyl-L-methionine contacts are provided by residues 77-79, G113, V133, and 140-142; these read TTA and PSL.

This sequence belongs to the class IV-like SAM-binding methyltransferase superfamily. RNA methyltransferase TrmH family.

This is an uncharacterized protein from Escherichia coli (strain K12).